Here is a 505-residue protein sequence, read N- to C-terminus: Catalase (505 aa).

Residues 1 to 25 (MSQQDKKLTGVFGHPVSDRENSMTA) are disordered. Residues histidine 56 and asparagine 129 contribute to the active site. Tyrosine 339 is a binding site for heme.

This sequence belongs to the catalase family. As to quaternary structure, homodimer. Heme is required as a cofactor.

It carries out the reaction 2 H2O2 = O2 + 2 H2O. Decomposes hydrogen peroxide into water and oxygen; serves to protect cells from the toxic effects of hydrogen peroxide. This chain is Catalase (katA), found in Staphylococcus aureus (strain MSSA476).